Reading from the N-terminus, the 757-residue chain is Polyribonucleotide nucleotidyltransferase (757 aa).

Mg(2+) contacts are provided by Asp489 and Asp495. The region spanning 556–615 (PKILCYKIDKDVVHKVIGSGGKTIRGISSDTSAKIDIDQNNYVYIMADTEEALMEAKTRV) is the KH domain. Residues 632–700 (GELYDGKIVS…SDGKIKLTMR (69 aa)) form the S1 motif domain. Residues 702–757 (DEDRVGSGGSSSSPKKRFGAHPRKNGKDNRSNNSERGFNERSGSAEGSSISRKRFF) are disordered. Residues 715–725 (PKKRFGAHPRK) show a composition bias toward basic residues. Residues 732-751 (SNNSERGFNERSGSAEGSSI) are compositionally biased toward polar residues.

This sequence belongs to the polyribonucleotide nucleotidyltransferase family. Mg(2+) serves as cofactor.

The protein localises to the cytoplasm. The enzyme catalyses RNA(n+1) + phosphate = RNA(n) + a ribonucleoside 5'-diphosphate. Its function is as follows. Involved in mRNA degradation. Catalyzes the phosphorolysis of single-stranded polyribonucleotides processively in the 3'- to 5'-direction. The protein is Polyribonucleotide nucleotidyltransferase of Neorickettsia sennetsu (strain ATCC VR-367 / Miyayama) (Ehrlichia sennetsu).